The chain runs to 156 residues: Small ribosomal subunit protein uS7 (156 aa).

It belongs to the universal ribosomal protein uS7 family. In terms of assembly, part of the 30S ribosomal subunit. Contacts proteins S9 and S11.

One of the primary rRNA binding proteins, it binds directly to 16S rRNA where it nucleates assembly of the head domain of the 30S subunit. Is located at the subunit interface close to the decoding center, probably blocks exit of the E-site tRNA. The chain is Small ribosomal subunit protein uS7 from Pseudomonas entomophila (strain L48).